The chain runs to 437 residues: MNNMQLKATSPLAEWLSYLEKSHFKPIDLGLDRIKSVAEKLDLLHPVPYVITVGGTNGKGTTCRLLETILLNHGLRVGVYSSPHLLRYNERVRIQNQDLPDEAHTASFAFIDENKTESLTYFEFSTLSALHLFKQAKLDVVILEVGLGGRLDATNIVDSHLAVITSIDIDHTDFLGDTREAIAFEKAGIFRENCPVVIGEPNVPQTMLDQAEKLHCQVARRDVDWLFEQNAENWQWQNKKVRLENLPFCQIPLANAATVLAAVQYLPFDISEQTLRKSLQEVELVGRFQAIKTDKREKLADYLGVPVETLPTIIVDVGHNPHAAKYLSEKLTALKRSIEGKMIAVCGMLKDKDANGVFEHLTPIIDEWHCVTLGGYRGQSGDELVEKLKSHFPNIQATSDNSVMDGVCTALKSAVKNDVVLVFGSFHTVAEFWAVVE.

A 7,8-dihydropteroate-binding site is contributed by 28–30 (DLG). An ATP-binding site is contributed by 58–61 (GKGT). Ser-82 is a binding site for Mg(2+). 120–123 (TYFE) contacts 7,8-dihydropteroate. Glu-144 serves as a coordination point for Mg(2+). 151 to 153 (LDA) contributes to the 7,8-dihydropteroate binding site. His-171 provides a ligand contact to Mg(2+). ATP is bound by residues Asn-255, Arg-287, and Asp-316.

It belongs to the folylpolyglutamate synthase family. In terms of assembly, monomer. Mg(2+) is required as a cofactor.

It catalyses the reaction 7,8-dihydropteroate + L-glutamate + ATP = 7,8-dihydrofolate + ADP + phosphate + H(+). The catalysed reaction is (6S)-5,6,7,8-tetrahydrofolyl-(gamma-L-Glu)(n) + L-glutamate + ATP = (6S)-5,6,7,8-tetrahydrofolyl-(gamma-L-Glu)(n+1) + ADP + phosphate + H(+). It carries out the reaction 10-formyltetrahydrofolyl-(gamma-L-Glu)(n) + L-glutamate + ATP = 10-formyltetrahydrofolyl-(gamma-L-Glu)(n+1) + ADP + phosphate + H(+). The enzyme catalyses (6R)-5,10-methylenetetrahydrofolyl-(gamma-L-Glu)(n) + L-glutamate + ATP = (6R)-5,10-methylenetetrahydrofolyl-(gamma-L-Glu)(n+1) + ADP + phosphate + H(+). Its pathway is cofactor biosynthesis; tetrahydrofolate biosynthesis; 7,8-dihydrofolate from 2-amino-4-hydroxy-6-hydroxymethyl-7,8-dihydropteridine diphosphate and 4-aminobenzoate: step 2/2. The protein operates within cofactor biosynthesis; tetrahydrofolylpolyglutamate biosynthesis. Functions in two distinct reactions of the de novo folate biosynthetic pathway. Catalyzes the addition of a glutamate residue to dihydropteroate (7,8-dihydropteroate or H2Pte) to form dihydrofolate (7,8-dihydrofolate monoglutamate or H2Pte-Glu). Also catalyzes successive additions of L-glutamate to tetrahydrofolate or 10-formyltetrahydrofolate or 5,10-methylenetetrahydrofolate, leading to folylpolyglutamate derivatives. The sequence is that of Dihydrofolate synthase/folylpolyglutamate synthase (folC) from Haemophilus influenzae (strain ATCC 51907 / DSM 11121 / KW20 / Rd).